The following is a 70-amino-acid chain: MMAKQVVVLLALLLLLPIVTASMGDASGRTGRIYMYGTSIQDLFRYLQLDYQRNVFLLRFLLGRGGLLLH.

The signal sequence occupies residues 1–21 (MMAKQVVVLLALLLLLPIVTA). Positions 22 to 32 (SMGDASGRTGR) are excised as a propeptide.

As to expression, expressed by the venom duct.

The protein resides in the secreted. Its function is as follows. Acts as a neurotoxin by inhibiting an ion channel. This chain is Turripeptide OL179, found in Iotyrris olangoensis (Sea snail).